The primary structure comprises 547 residues: NXPE family member 1 (547 aa).

A signal peptide spans 1-21; it reads MSSNTMLQKTLLILISFSVVT. 2 N-linked (GlcNAc...) asparagine glycosylation sites follow: Asn-39 and Asn-211.

It belongs to the NXPE family.

It localises to the secreted. This Homo sapiens (Human) protein is NXPE family member 1 (NXPE1).